The sequence spans 541 residues: NEDD8-activating enzyme E1 regulatory subunit (541 aa).

Belongs to the ubiquitin-activating E1 family. ULA1 subfamily. As to quaternary structure, heterodimer of uba-3 and ula-1. The complex binds NEDD8 and ubc-12.

The protein operates within protein modification; protein neddylation. Functionally, regulatory subunit of the dimeric uba-3-ula-1 E1 enzyme. E1 activates NEDD8 by first adenylating its C-terminal glycine residue with ATP, thereafter linking this residue to the side chain of the catalytic cysteine, yielding a NEDD8-rfl-1 (uba-3) thioester and free AMP. E1 finally transfers NEDD8 to the catalytic cysteine of ubc-12. Required for rfl-1 (uba-3) nuclear localization during early embryonic development. This Caenorhabditis elegans protein is NEDD8-activating enzyme E1 regulatory subunit (ula-1).